The chain runs to 520 residues: 2-isopropylmalate synthase (520 aa).

The 263-residue stretch at 5–267 (VIIFDTTLRD…HTNINHQEIY (263 aa)) folds into the Pyruvate carboxyltransferase domain. 4 residues coordinate Mn(2+): D14, H202, H204, and N238. The regulatory domain stretch occupies residues 392–520 (RLDYFSVQSG…RLQQNNQEMV (129 aa)).

Belongs to the alpha-IPM synthase/homocitrate synthase family. LeuA type 1 subfamily. Homodimer. Mn(2+) is required as a cofactor.

The protein localises to the cytoplasm. It carries out the reaction 3-methyl-2-oxobutanoate + acetyl-CoA + H2O = (2S)-2-isopropylmalate + CoA + H(+). It participates in amino-acid biosynthesis; L-leucine biosynthesis; L-leucine from 3-methyl-2-oxobutanoate: step 1/4. In terms of biological role, catalyzes the condensation of the acetyl group of acetyl-CoA with 3-methyl-2-oxobutanoate (2-ketoisovalerate) to form 3-carboxy-3-hydroxy-4-methylpentanoate (2-isopropylmalate). This chain is 2-isopropylmalate synthase, found in Yersinia enterocolitica serotype O:8 / biotype 1B (strain NCTC 13174 / 8081).